Here is a 120-residue protein sequence, read N- to C-terminus: U13-lycotoxin-Ls1c (120 aa).

The N-terminal stretch at 1–16 is a signal peptide; it reads MKILFVLISILYAVYC. Positions 17–54 are excised as a propeptide; it reads FSSEEDVDSAYLANELEPVEDINSEQYAALEPKEEQER. Intrachain disulfides connect C56-C70, C69-C87, and C78-C85. The region spanning 56–95 is the Agouti domain; that stretch reads CADMGQDRKDDCDCCLNIATCNCWFGRYFCSCTFGDYQTC.

It belongs to the neurotoxin 05 (agouti) family. In terms of processing, contains 5 disulfide bonds. As to expression, expressed by the venom gland.

The protein resides in the secreted. This chain is U13-lycotoxin-Ls1c, found in Lycosa singoriensis (Wolf spider).